Reading from the N-terminus, the 200-residue chain is uncharacterized protein (200 aa).

Residues 1–21 (MSNSAQRDARNSRDESARASD) form a disordered region. Basic and acidic residues predominate over residues 7 to 21 (RDARNSRDESARASD).

This is an uncharacterized protein from Mycobacterium tuberculosis (strain CDC 1551 / Oshkosh).